We begin with the raw amino-acid sequence, 343 residues long: Lumican (343 aa).

A signal peptide spans 1-18 (MTLNSLPIFLVLISGIFC). Residue Gln19 is modified to Pyrrolidone carboxylic acid. Tyr20 and Tyr22 each carry sulfotyrosine. Positions 31-69 (DPFGPSTAVCAPECNCPLSYPTAMYCDNLKLKTIPIVPS) constitute an LRRNT domain. LRR repeat units lie at residues 70 to 91 (GIKY…TFDN), 94 to 117 (DLQW…VFSK), 120 to 140 (NLKK…PLPK), 141 to 162 (TLDD…ALEG), 165 to 186 (NLTV…GAFK), 190 to 211 (SLLY…LPHS), 212 to 232 (LLML…YFQG), and 235 to 255 (TLQY…PGNV). N-linked (GlcNAc...) (keratan sulfate) asparagine glycosylation is present at Asn91. The N-linked (GlcNAc...) (keratan sulfate) asparagine glycan is linked to Asn130. A glycan (N-linked (GlcNAc...) (keratan sulfate) asparagine) is linked at Asn165. The N-linked (GlcNAc...) (keratan sulfate) asparagine glycan is linked to Asn257. 3 LRR repeats span residues 260–281 (SLVE…SENL), 282–301 (ENFY…SFCK), and 310–330 (KITH…PQEM). Residues Cys300 and Cys333 are joined by a disulfide bond. A glycan (N-linked (GlcNAc...) asparagine) is linked at Asn320.

It belongs to the small leucine-rich proteoglycan (SLRP) family. SLRP class II subfamily. Binds to laminin. Contains keratan sulfate. As to expression, cornea and other tissues.

Its subcellular location is the secreted. It is found in the extracellular space. It localises to the extracellular matrix. This Gallus gallus (Chicken) protein is Lumican (LUM).